The chain runs to 199 residues: Large ribosomal subunit protein bL25 (199 aa).

Belongs to the bacterial ribosomal protein bL25 family. CTC subfamily. In terms of assembly, part of the 50S ribosomal subunit; part of the 5S rRNA/L5/L18/L25 subcomplex. Contacts the 5S rRNA. Binds to the 5S rRNA independently of L5 and L18.

This is one of the proteins that binds to the 5S RNA in the ribosome where it forms part of the central protuberance. This is Large ribosomal subunit protein bL25 from Pelodictyon phaeoclathratiforme (strain DSM 5477 / BU-1).